We begin with the raw amino-acid sequence, 688 residues long: Elongation factor G (688 aa).

Positions 8 to 282 constitute a tr-type G domain; sequence DKFRNFGIMA…GVVDYLPSPL (275 aa). GTP-binding positions include 17 to 24, 81 to 85, and 135 to 138; these read AHIDAGKT, DTPGH, and NKMD.

This sequence belongs to the TRAFAC class translation factor GTPase superfamily. Classic translation factor GTPase family. EF-G/EF-2 subfamily.

The protein localises to the cytoplasm. In terms of biological role, catalyzes the GTP-dependent ribosomal translocation step during translation elongation. During this step, the ribosome changes from the pre-translocational (PRE) to the post-translocational (POST) state as the newly formed A-site-bound peptidyl-tRNA and P-site-bound deacylated tRNA move to the P and E sites, respectively. Catalyzes the coordinated movement of the two tRNA molecules, the mRNA and conformational changes in the ribosome. This Clostridium botulinum (strain Eklund 17B / Type B) protein is Elongation factor G.